The chain runs to 85 residues: Anti-neuroexcitation peptide 3 (85 aa).

A signal peptide spans 1-21 (MKLSLLLVISASMLIDGLVNA). The LCN-type CS-alpha/beta domain occupies 22–82 (DGYIRGSNGC…TWKSESNTCG (61 aa)). 4 disulfide bridges follow: C31–C81, C35–C56, C42–C63, and C46–C65.

This sequence belongs to the long (4 C-C) scorpion toxin superfamily. Sodium channel inhibitor family. Beta subfamily. Expressed by the venom gland.

It localises to the secreted. Its function is as follows. Binds to sodium channels (Nav) and inhibits them. Recombinant ANEP delays the convulsion seizure of model animals by 18% and shows anti-neuroexcitatory activity. The sequence is that of Anti-neuroexcitation peptide 3 from Olivierus martensii (Manchurian scorpion).